The sequence spans 250 residues: MAITMREMLEAGVHFGHQTRFWNPKMAPFIFGHRNKIHIINLEKSLPMFQEAAKFASQVSARRGTVLMVGTKRQARETVALEAQRAGVPYVDQRWLGGMLTNFKTVKTSIKRLKDMKIQQEAGLDSLSKKEQLMFARELAKLERDIGGIQDMTVLPDAIFVIDVGFHKIAIAEAKKLGIPLIAVVDTNHSPEGIDYIIPGNDDSSKAVILYARGIADAIIEGRSNAVDDVVKAVVAESSDEFVEVNETAA.

It belongs to the universal ribosomal protein uS2 family.

The sequence is that of Small ribosomal subunit protein uS2 from Albidiferax ferrireducens (strain ATCC BAA-621 / DSM 15236 / T118) (Rhodoferax ferrireducens).